A 410-amino-acid polypeptide reads, in one-letter code: F-box/WD-40 repeat-containing protein 1 (410 aa).

The F-box domain occupies 32 to 79; that stretch reads SKECSLLPFELFEEILCRVPTKSLLRLKLTCKRWLALFNDKRFIYKHL. WD repeat units lie at residues 109-150 and 269-309; these read PNKF…VRWI and DVHN…NGVS.

The polypeptide is F-box/WD-40 repeat-containing protein 1 (FBW1) (Arabidopsis thaliana (Mouse-ear cress)).